Consider the following 121-residue polypeptide: Large ribosomal subunit protein uL18 (121 aa).

The protein belongs to the universal ribosomal protein uL18 family. As to quaternary structure, part of the 50S ribosomal subunit; part of the 5S rRNA/L5/L18/L25 subcomplex. Contacts the 5S and 23S rRNAs.

Its function is as follows. This is one of the proteins that bind and probably mediate the attachment of the 5S RNA into the large ribosomal subunit, where it forms part of the central protuberance. In Paraburkholderia xenovorans (strain LB400), this protein is Large ribosomal subunit protein uL18.